The sequence spans 284 residues: Putative ABC transporter ATP-binding protein MG468.1 homolog (284 aa).

Residues 53–284 (VLFKGVCKAV…PKTINEINWV (232 aa)) enclose the ABC transporter domain. An ATP-binding site is contributed by 89 to 96 (GKSGSGKT).

Belongs to the ABC transporter superfamily.

In Mycoplasma pneumoniae (strain ATCC 29342 / M129 / Subtype 1) (Mycoplasmoides pneumoniae), this protein is Putative ABC transporter ATP-binding protein MG468.1 homolog.